Consider the following 317-residue polypeptide: DNA-directed RNA polymerase subunit alpha (317 aa).

Residues 1–230 (MIEIEMEKPK…EHLNLFITLT (230 aa)) are alpha N-terminal domain (alpha-NTD). Residues 247–317 (KEKVLEMTIE…LGLGLRPSDE (71 aa)) are alpha C-terminal domain (alpha-CTD).

Belongs to the RNA polymerase alpha chain family. As to quaternary structure, homodimer. The RNAP catalytic core consists of 2 alpha, 1 beta, 1 beta' and 1 omega subunit. When a sigma factor is associated with the core the holoenzyme is formed, which can initiate transcription.

It carries out the reaction RNA(n) + a ribonucleoside 5'-triphosphate = RNA(n+1) + diphosphate. Functionally, DNA-dependent RNA polymerase catalyzes the transcription of DNA into RNA using the four ribonucleoside triphosphates as substrates. This chain is DNA-directed RNA polymerase subunit alpha, found in Alkaliphilus oremlandii (strain OhILAs) (Clostridium oremlandii (strain OhILAs)).